The chain runs to 222 residues: 2-C-methyl-D-erythritol 2,4-cyclodiphosphate synthase, chloroplastic (222 aa).

The N-terminal 43 residues, 1 to 43, are a transit peptide targeting the chloroplast; sequence MATASSLFLASPVATAPTARARSTPSASPARPSLRLRRPSTLA. A divalent metal cation is bound by residues Asp73 and His75. Residues 73–75, 99–100, 103–111, 121–123, 126–130, Asp130, 165–171, and 196–200 contribute to the substrate site; these read DLH, HS, DVLLHCVVD, DIG, FPDSD, LQKPKIS, and AKTHE. His107 serves as a coordination point for a divalent metal cation.

Belongs to the IspF family. As to quaternary structure, homotrimer. A divalent metal cation serves as cofactor. As to expression, expressed in roots, leaves, stems, leaf sheaths and young panicles.

It localises to the plastid. The protein resides in the chloroplast. It catalyses the reaction 4-CDP-2-C-methyl-D-erythritol 2-phosphate = 2-C-methyl-D-erythritol 2,4-cyclic diphosphate + CMP. It participates in isoprenoid biosynthesis; isopentenyl diphosphate biosynthesis via DXP pathway; isopentenyl diphosphate from 1-deoxy-D-xylulose 5-phosphate: step 4/6. Its function is as follows. Enzyme of the plastid non-mevalonate pathway for isoprenoid biosynthesis that converts 4-diphosphocytidyl-2C-methyl-D-erythritol 2-phosphate into 2C-methyl-D-erythritol 2,4-cyclodiphosphate and CMP. Is essential for chloroplast development. The polypeptide is 2-C-methyl-D-erythritol 2,4-cyclodiphosphate synthase, chloroplastic (Oryza sativa subsp. japonica (Rice)).